The primary structure comprises 99 residues: Ubiquitin-related modifier 1 homolog (99 aa).

Gly-99 carries the 1-thioglycine modification. Gly-99 is covalently cross-linked (Glycyl lysine isopeptide (Gly-Lys) (interchain with K-? in acceptor proteins)).

It belongs to the URM1 family. In terms of assembly, interacts with cer. Post-translationally, C-terminal thiocarboxylation occurs in 2 steps, it is first acyl-adenylated (-COAMP) via the hesA/moeB/thiF part of the MOCS3 homolog, then thiocarboxylated (-COSH) via the rhodanese domain of the MOCS3 homolog.

It is found in the cytoplasm. Its pathway is tRNA modification; 5-methoxycarbonylmethyl-2-thiouridine-tRNA biosynthesis. Acts as a sulfur carrier required for 2-thiolation of mcm(5)S(2)U at tRNA wobble positions of cytosolic tRNA(Lys), tRNA(Glu) and tRNA(Gln). Serves as sulfur donor in tRNA 2-thiolation reaction by being thiocarboxylated (-COSH) at its C-terminus by MOCS3. The sulfur is then transferred to tRNA to form 2-thiolation of mcm(5)S(2)U. Also acts as a ubiquitin-like protein (UBL) that is covalently conjugated via an isopeptide bond to lysine residues of target proteins such as Prx2/Jafrac1, Ciao1, Eip71CD and GILT1. The thiocarboxylated form serves as substrate for conjugation and oxidative stress specifically induces the formation of UBL-protein conjugates. In Drosophila persimilis (Fruit fly), this protein is Ubiquitin-related modifier 1 homolog.